Here is a 145-residue protein sequence, read N- to C-terminus: D-aminoacyl-tRNA deacylase (145 aa).

Positions 137-138 (GP) match the Gly-cisPro motif, important for rejection of L-amino acids motif.

The protein belongs to the DTD family. Homodimer.

The protein resides in the cytoplasm. It carries out the reaction glycyl-tRNA(Ala) + H2O = tRNA(Ala) + glycine + H(+). The enzyme catalyses a D-aminoacyl-tRNA + H2O = a tRNA + a D-alpha-amino acid + H(+). In terms of biological role, an aminoacyl-tRNA editing enzyme that deacylates mischarged D-aminoacyl-tRNAs. Also deacylates mischarged glycyl-tRNA(Ala), protecting cells against glycine mischarging by AlaRS. Acts via tRNA-based rather than protein-based catalysis; rejects L-amino acids rather than detecting D-amino acids in the active site. By recycling D-aminoacyl-tRNA to D-amino acids and free tRNA molecules, this enzyme counteracts the toxicity associated with the formation of D-aminoacyl-tRNA entities in vivo and helps enforce protein L-homochirality. This is D-aminoacyl-tRNA deacylase from Deinococcus radiodurans (strain ATCC 13939 / DSM 20539 / JCM 16871 / CCUG 27074 / LMG 4051 / NBRC 15346 / NCIMB 9279 / VKM B-1422 / R1).